Reading from the N-terminus, the 575-residue chain is MGKVVLLPEELRNKIAAGEVVERPVSVVKELVENSIDAGATRIIVEFANGGETLISVIDDGEGMTREDAILALNRFATSKIKTEEDLYNIKTLGFRGEALASIASVSKMELRSKTELEDGVFIKVEGGVIKEVNLWQGSKGTVIKVSDLFYNVPARKKFLKSKATETNLIIDFVKRIAIAYPQISFQLIQDGKSKFITPGDGDLENLISLLFDIRVQESLISFQKREGDYCIEGFVSKPGKLIALKSQDYFYVNRRWVRNNTILQAIREGYKGRILDGYFPFSIIFLTVPYSEVDVNVHPTKREVKFQKEKEVYEFVFRSIREALDEEEKKFFINMKAPETESKEYKSDSQITLDREILSLPLEFKPYKSEKKLSEAVSEYIPLRSGFRIVGQIFDNYIILETKDKVYIIDQHAAHERIKYEELKEELNLGYIQNVEILFPVVIEVSEEEKILLDKYKDLLERFAFSWEDFGPYHIRIVKVPYEFLNFDSKSIENLFREIISDISEKDLSKLEDKIIKSMACHSAVRSGNILIREEMEMLIKLIFEKNIPLTCPHGRPYIWEISREDLERYFHRR.

This sequence belongs to the DNA mismatch repair MutL/HexB family.

Functionally, this protein is involved in the repair of mismatches in DNA. It is required for dam-dependent methyl-directed DNA mismatch repair. May act as a 'molecular matchmaker', a protein that promotes the formation of a stable complex between two or more DNA-binding proteins in an ATP-dependent manner without itself being part of a final effector complex. The sequence is that of DNA mismatch repair protein MutL from Dictyoglomus thermophilum (strain ATCC 35947 / DSM 3960 / H-6-12).